Reading from the N-terminus, the 269-residue chain is Transcription factor MYB7 (269 aa).

2 consecutive HTH myb-type domains span residues 9-61 (KEHM…INYL) and 62-116 (RPDL…KRKL). 2 DNA-binding regions (H-T-H motif) span residues 37 to 61 (WRSL…INYL) and 89 to 112 (WSLI…NTHI).

Interacts with SAD2. In terms of tissue distribution, expressed in anthers. Expressed in pollen grains and mature seeds. Expressed in roots and vasculature of leaves.

It is found in the nucleus. Functionally, transcription factor involved in the negative regulation of flavonol biosynthesis. Represses the early phenylpropanoid genes, phenylalanine ammonia-lyase (PAL), cinnamate 4-hydroxylase (C4H) and 4-coumarate-CoA ligase (4CL), as well as the flavonoid-specific genes, flavonoid 3'-hydroxylase (F3'H) and dihydroflavonol 4-reductase (DFR). Plays a role in seed germination inhibition. Negatively regulates the expression of the abscisic acid (ABA) signaling transcription factor ABI5 in seeds. The protein is Transcription factor MYB7 of Arabidopsis thaliana (Mouse-ear cress).